The following is a 373-amino-acid chain: tRNA (guanine(26)-N(2))-dimethyltransferase (373 aa).

Positions 2–365 constitute a Trm1 methyltransferase domain; the sequence is KIISEGETKL…AELSDLVVLI (364 aa). The S-adenosyl-L-methionine site is built by R35, R66, D86, D113, and A114.

Belongs to the class I-like SAM-binding methyltransferase superfamily. Trm1 family.

It catalyses the reaction guanosine(26) in tRNA + 2 S-adenosyl-L-methionine = N(2)-dimethylguanosine(26) in tRNA + 2 S-adenosyl-L-homocysteine + 2 H(+). In terms of biological role, dimethylates a single guanine residue at position 26 of a number of tRNAs using S-adenosyl-L-methionine as donor of the methyl groups. The chain is tRNA (guanine(26)-N(2))-dimethyltransferase from Methanococcus maripaludis (Methanococcus deltae).